The chain runs to 32 residues: Cytochrome b6-f complex subunit 6 (32 aa).

The chain crosses the membrane as a helical span at residues 4 to 26 (ITSYVGLLFTALGFTLGLYFGLT).

It belongs to the PetL family. As to quaternary structure, the 4 large subunits of the cytochrome b6-f complex are cytochrome b6, subunit IV (17 kDa polypeptide, PetD), cytochrome f and the Rieske protein, while the 4 small subunits are PetG, PetL, PetM and PetN. The complex functions as a dimer.

Its subcellular location is the plastid. It is found in the chloroplast thylakoid membrane. Its function is as follows. Component of the cytochrome b6-f complex, which mediates electron transfer between photosystem II (PSII) and photosystem I (PSI), cyclic electron flow around PSI, and state transitions. PetL is important for photoautotrophic growth as well as for electron transfer efficiency and stability of the cytochrome b6-f complex. The sequence is that of Cytochrome b6-f complex subunit 6 from Tetradesmus obliquus (Green alga).